The sequence spans 185 residues: Translation initiation factor IF-3 (185 aa).

The protein belongs to the IF-3 family. In terms of assembly, monomer.

The protein resides in the cytoplasm. IF-3 binds to the 30S ribosomal subunit and shifts the equilibrium between 70S ribosomes and their 50S and 30S subunits in favor of the free subunits, thus enhancing the availability of 30S subunits on which protein synthesis initiation begins. This chain is Translation initiation factor IF-3, found in Streptococcus pneumoniae serotype 19F (strain G54).